A 687-amino-acid chain; its full sequence is MTLFQKLQWFCQLIRLRAYYKFLLLIAYTLFGAWLFRFYELQADIKRRAIYGNDTNLIRRQLAERWIEMHDDAVLRNNSVLRRRRAAEAVDWLLGELNLSDHMREFSEDTPWTWTGAMFYAGQLYTTIGYGYPTAKTDEGRICTVLYALFGIPCFLMYLKAIGKTLSKRLKKIYKRVRRSAFGKFLLPTRVTATKDGFEDPDASAEERKRKPFPIPIAIILLIIWICFSASMFCQWEKTWDFPSAVYFFIVSISTVGLGDMLFRTPDMMVFNFLLILFGLALLSMCFELITDRIAKWKQKRFDEHIKKVQKMAFQVFEKDPFVEEAPPLGIRMAPNLMQIAATHVSEEKRGFFAELKDWFAGKVTDNVIQSKLEDTDDESDEDEALEEFESPQVATLTANDLVVCTNGGATRRVSKQSYAFSDVSNLSNSKIPPGNNYGQLLDRIKAMEKFKPKKGDLDSRMFAKFLENKKLAKILEQTELRELATVSCQTDLSGLVVQRRNPKGRHARIGSCSSQSTMSTFLPRNNSHAPDEDSVMSITFGDLKFDYITEPLIDEYHLRESNHSIFDFDDDEVVRIPQKMLVSRPGMPPPPPSRPSQLASPLRALLEKEQKYDEDPEIQLTPRRLASLTDVQARKVKLGYDENLQHARLVCGLLPQDFDSPSTSTSTSMIDSGYDLSKRDAPVNIV.

At 1-21 the chain is on the cytoplasmic side; that stretch reads MTLFQKLQWFCQLIRLRAYYK. The chain crosses the membrane as a helical span at residues 22-42; it reads FLLLIAYTLFGAWLFRFYELQ. N-linked (GlcNAc...) asparagine glycans are attached at residues Asn53, Asn77, and Asn98. Residues 112 to 132 constitute an intramembrane region (pore-forming); it reads WTWTGAMFYAGQLYTTIGYGY. The helical transmembrane segment at 142–162 threads the bilayer; it reads ICTVLYALFGIPCFLMYLKAI. Residues 163-212 are Cytoplasmic-facing; sequence GKTLSKRLKKIYKRVRRSAFGKFLLPTRVTATKDGFEDPDASAEERKRKP. A helical transmembrane segment spans residues 213-233; that stretch reads FPIPIAIILLIIWICFSASMF. Positions 242 to 262 form an intramembrane region, pore-forming; sequence FPSAVYFFIVSISTVGLGDML. The chain crosses the membrane as a helical span at residues 270 to 290; sequence VFNFLLILFGLALLSMCFELI. At 291 to 687 the chain is on the cytoplasmic side; that stretch reads TDRIAKWKQK…SKRDAPVNIV (397 aa). Residues 661-687 are disordered; that stretch reads SPSTSTSTSMIDSGYDLSKRDAPVNIV. Residues 677 to 687 are compositionally biased toward basic and acidic residues; it reads LSKRDAPVNIV.

This sequence belongs to the two pore domain potassium channel (TC 1.A.1.8) family.

The protein localises to the membrane. The polypeptide is TWiK family of potassium channels protein 12 (Caenorhabditis briggsae).